Here is a 448-residue protein sequence, read N- to C-terminus: Elongation factor 1-alpha (448 aa).

One can recognise a tr-type G domain in the interval 5 to 230 (KIHISIVVIG…DQINEPKRPS (226 aa)). Residues 14-21 (GHVDSGKS) are G1. Position 14-21 (14-21 (GHVDSGKS)) interacts with GTP. N6,N6-dimethyllysine is present on Lys-55. A G2 region spans residues 70 to 74 (GITID). Lys-79 carries the N6,N6,N6-trimethyllysine modification. The segment at 91–94 (DAPG) is G3. GTP is bound by residues 91 to 95 (DAPGH) and 153 to 156 (NKMD). The segment at 153–156 (NKMD) is G4. Residue Lys-187 is modified to N6,N6,N6-trimethyllysine. A G5 region spans residues 194–196 (SGF). The residue at position 261 (Lys-261) is an N6-methyllysine. Glu-289 is subject to 5-glutamyl glycerylphosphorylethanolamine. Lys-306 is subject to N6,N6,N6-trimethyllysine. A 5-glutamyl glycerylphosphorylethanolamine modification is found at Glu-362. Lys-396 is subject to N6,N6,N6-trimethyllysine.

Belongs to the TRAFAC class translation factor GTPase superfamily. Classic translation factor GTPase family. EF-Tu/EF-1A subfamily.

The protein localises to the cytoplasm. This protein promotes the GTP-dependent binding of aminoacyl-tRNA to the A-site of ribosomes during protein biosynthesis. This Solanum lycopersicum (Tomato) protein is Elongation factor 1-alpha.